The sequence spans 359 residues: Malonyl-CoA reductase (359 aa).

16–19 contacts NADP(+); that stretch reads TGLV. Catalysis depends on Cys-153, which acts as the Acyl-thioester intermediate. 183-184 lines the NADP(+) pocket; that stretch reads SG. Residue His-248 is the Proton acceptor of the active site. Residue 335-336 coordinates NADP(+); that stretch reads NT.

This sequence belongs to the aspartate-semialdehyde dehydrogenase family. In terms of assembly, homodimer and possibly a tetramer. The cofactor is Mg(2+). It depends on Mn(2+) as a cofactor.

It carries out the reaction 3-oxopropanoate + NADP(+) + CoA = malonyl-CoA + NADPH + H(+). Its activity is regulated as follows. Activated by dithioerythritol (5 mM) and inhibited by the thiol-blocking agent iodoacetamide (0.1 mM). In terms of biological role, catalyzes the reduction of malonyl-CoA to malonate semialdehyde, a key step in the 3-hydroxypropanoate and the 3-hydroxypropanoate/4-hydroxybutyrate cycles. Can also use succinyl-CoA and succinate semialdehyde as substrates but at a lower rate than malonyl-CoA. This chain is Malonyl-CoA reductase (mcr), found in Sulfurisphaera tokodaii (strain DSM 16993 / JCM 10545 / NBRC 100140 / 7) (Sulfolobus tokodaii).